The sequence spans 182 residues: Core-binding factor subunit beta (182 aa).

The residue at position 173 (A173) is a Phosphoserine.

This sequence belongs to the CBF-beta family. Heterodimer with RUNX1, RUNX2 and RUNX3. Interacts with COPRS. Found in a complex with PRMT5 and RUNX1. As to quaternary structure, (Microbial infection) Interacts with HIV-1 Vif; forming an active cullin-5-RING E3 ubiquitin-protein ligase complex (ECS complex).

It localises to the nucleus. Functionally, forms the heterodimeric complex core-binding factor (CBF) with RUNX family proteins (RUNX1, RUNX2, and RUNX3). RUNX members modulate the transcription of their target genes through recognizing the core consensus binding sequence 5'-TGTGGT-3', or very rarely, 5'-TGCGGT-3', within their regulatory regions via their runt domain, while CBFB is a non-DNA-binding regulatory subunit that allosterically enhances the sequence-specific DNA-binding capacity of RUNX. The heterodimers bind to the core site of a number of enhancers and promoters, including murine leukemia virus, polyomavirus enhancer, T-cell receptor enhancers, LCK, IL3 and GM-CSF promoters. CBF complexes repress ZBTB7B transcription factor during cytotoxic (CD8+) T cell development. They bind to RUNX-binding sequence within the ZBTB7B locus acting as transcriptional silencer and allowing for cytotoxic T cell differentiation. In terms of biological role, (Microbial infection) Following infection, hijacked by the HIV-1 Vif protein, leading to the formation a cullin-5-RING E3 ubiquitin-protein ligase complex (ECS complex) that catalyzes ubiquitination and degradation of APOBEC3F and APOBEC3G. The complex can also ubiquitinate APOBEC3H to some extent. Association with HIV-1 Vif protein also inhibits the transcription coactivator activity of CBFB/CBF-beta. The protein is Core-binding factor subunit beta (CBFB) of Homo sapiens (Human).